Consider the following 318-residue polypeptide: Acetyl-coenzyme A carboxylase carboxyl transferase subunit alpha (318 aa).

In terms of domain architecture, CoA carboxyltransferase C-terminal spans 31-292; the sequence is DLTNEIEKLE…NKTITKSLHA (262 aa).

This sequence belongs to the AccA family. In terms of assembly, acetyl-CoA carboxylase is a heterohexamer composed of biotin carboxyl carrier protein (AccB), biotin carboxylase (AccC) and two subunits each of ACCase subunit alpha (AccA) and ACCase subunit beta (AccD).

It is found in the cytoplasm. The enzyme catalyses N(6)-carboxybiotinyl-L-lysyl-[protein] + acetyl-CoA = N(6)-biotinyl-L-lysyl-[protein] + malonyl-CoA. It functions in the pathway lipid metabolism; malonyl-CoA biosynthesis; malonyl-CoA from acetyl-CoA: step 1/1. Its function is as follows. Component of the acetyl coenzyme A carboxylase (ACC) complex. First, biotin carboxylase catalyzes the carboxylation of biotin on its carrier protein (BCCP) and then the CO(2) group is transferred by the carboxyltransferase to acetyl-CoA to form malonyl-CoA. The chain is Acetyl-coenzyme A carboxylase carboxyl transferase subunit alpha from Listeria monocytogenes serotype 4a (strain HCC23).